Reading from the N-terminus, the 150-residue chain is Arginine repressor (150 aa).

The protein belongs to the ArgR family.

It is found in the cytoplasm. The protein operates within amino-acid biosynthesis; L-arginine biosynthesis [regulation]. Regulates arginine biosynthesis genes. In Desulforudis audaxviator (strain MP104C), this protein is Arginine repressor.